The chain runs to 100 residues: Integration host factor subunit alpha (100 aa).

Residues 53 to 72 (FQLRDKPQRPGRNPKTGEEV) form a disordered region.

Belongs to the bacterial histone-like protein family. As to quaternary structure, heterodimer of an alpha and a beta chain.

Its function is as follows. This protein is one of the two subunits of integration host factor, a specific DNA-binding protein that functions in genetic recombination as well as in transcriptional and translational control. This chain is Integration host factor subunit alpha, found in Neisseria meningitidis serogroup C (strain 053442).